A 634-amino-acid chain; its full sequence is Threonine--tRNA ligase (634 aa).

One can recognise a TGS domain in the interval 1–61; that stretch reads MINITLPDGS…DHDASLRIIT (61 aa). The interval 243-534 is catalytic; it reads DHRRIGKAQD…LIEHHAGAFP (292 aa). 3 residues coordinate Zn(2+): Cys334, His385, and His511.

The protein belongs to the class-II aminoacyl-tRNA synthetase family. Homodimer. It depends on Zn(2+) as a cofactor.

It localises to the cytoplasm. The catalysed reaction is tRNA(Thr) + L-threonine + ATP = L-threonyl-tRNA(Thr) + AMP + diphosphate + H(+). Functionally, catalyzes the attachment of threonine to tRNA(Thr) in a two-step reaction: L-threonine is first activated by ATP to form Thr-AMP and then transferred to the acceptor end of tRNA(Thr). Also edits incorrectly charged L-seryl-tRNA(Thr). This is Threonine--tRNA ligase from Xanthomonas oryzae pv. oryzae (strain MAFF 311018).